Here is a 98-residue protein sequence, read N- to C-terminus: Large ribosomal subunit protein uL23 (98 aa).

The protein belongs to the universal ribosomal protein uL23 family. In terms of assembly, part of the 50S ribosomal subunit. Contacts protein L29, and trigger factor when it is bound to the ribosome.

Functionally, one of the early assembly proteins it binds 23S rRNA. One of the proteins that surrounds the polypeptide exit tunnel on the outside of the ribosome. Forms the main docking site for trigger factor binding to the ribosome. This Frankia alni (strain DSM 45986 / CECT 9034 / ACN14a) protein is Large ribosomal subunit protein uL23.